A 635-amino-acid chain; its full sequence is Multiple inositol polyphosphate phosphatase 1 (635 aa).

The signal sequence occupies residues 1 to 23; it reads MMVKIKNIIILFCIFGLLSNVSS. The Extracellular portion of the chain corresponds to 24–565; the sequence is LSSSSSSSQS…GNDSHSKKSS (542 aa). Residues 66 to 102 form a disordered region; the sequence is KNGDSNSQGDGSSGNSNSNSNSNSNSNSNSDSSNEPP. Residues 67 to 99 show a composition bias toward low complexity; sequence NGDSNSQGDGSSGNSNSNSNSNSNSNSNSDSSN. The active site involves His-116. Over residues 380–421 the composition is skewed to low complexity; sequence SSSSSSSSSSNNGDNSGSNGSSGSGSSTSTSSNDNGSTNNND. Residues 380 to 425 form a disordered region; the sequence is SSSSSSSSSSNNGDNSGSNGSSGSGSSTSTSSNDNGSTNNNDNKVE. Residues 566–586 traverse the membrane as a helical segment; sequence YFLAIFIPITFLVGGTIGGIF. The Cytoplasmic portion of the chain corresponds to 587 to 635; that stretch reads TYFSYEKIMQVKNRKKLTQYGNDEFISSPKSKSFSFKPTKFDSRSPLIQ. The span at 614–624 shows a compositional bias: low complexity; sequence SPKSKSFSFKP. Residues 614–635 are disordered; it reads SPKSKSFSFKPTKFDSRSPLIQ.

Belongs to the histidine acid phosphatase family. MINPP1 subfamily.

It is found in the membrane. The enzyme catalyses 1D-myo-inositol hexakisphosphate + H2O = 1D-myo-inositol 1,2,4,5,6-pentakisphosphate + phosphate. It carries out the reaction 1D-myo-inositol 1,2,4,5,6-pentakisphosphate + H2O = 1D-myo-inositol 1,2,5,6-tetrakisphosphate + phosphate. The catalysed reaction is 1D-myo-inositol 1,2,5,6-tetrakisphosphate + H2O = 1D-myo-inositol 1,2,6-trisphosphate + phosphate. It catalyses the reaction 1D-myo-inositol 1,2,6-trisphosphate + H2O = 1D-myo-inositol 1,2-bisphosphate + phosphate. The enzyme catalyses 1D-myo-inositol 1,2-bisphosphate + H2O = 1D-myo-inositol 2-phosphate + phosphate. It carries out the reaction (2R)-2,3-bisphosphoglycerate + H2O = (2R)-2-phosphoglycerate + phosphate. In terms of biological role, probable multiple inositol polyphosphate phosphatase that hydrolyzes 1D-myo-inositol 1,3,4,5,6-pentakisphosphate (InsP5[2OH]) and 1D-myo-inositol hexakisphosphate (InsP6) to a range of less phosphorylated inositol phosphates. This regulates the availability of these various small molecule second messengers and metal chelators which control many aspects of cell physiology. May have a dual substrate specificity, and function as a 2,3-bisphosphoglycerate 3-phosphatase hydrolyzing 2,3-bisphosphoglycerate to 2-phosphoglycerate. 2,3-bisphosphoglycerate (BPG) is formed as part of the Rapoport-Luebering glycolytic bypass. In Dictyostelium discoideum (Social amoeba), this protein is Multiple inositol polyphosphate phosphatase 1 (mipp1).